Reading from the N-terminus, the 460-residue chain is Heme sensor protein HssS (460 aa).

Transmembrane regions (helical) follow at residues Ile11–Ile31 and Ile164–Ser184. The HAMP domain maps to Tyr186–Asp238. Residues Asn246–Pro456 enclose the Histidine kinase domain. His249 carries the phosphohistidine; by autocatalysis modification.

Post-translationally, autophosphorylated.

It is found in the cell membrane. It carries out the reaction ATP + protein L-histidine = ADP + protein N-phospho-L-histidine.. Functionally, member of the two-component regulatory system HssS/HssR involved in intracellular heme homeostasis and tempering of staphylococcal virulence. HssS functions as a heme sensor histidine kinase which is autophosphorylated at a histidine residue and transfers its phosphate group to an aspartate residue of HssR. HssR/HssS activates the expression of hrtAB, an efflux pump, in response to extracellular heme, hemin, hemoglobin or blood. The protein is Heme sensor protein HssS (hssS) of Staphylococcus saprophyticus subsp. saprophyticus (strain ATCC 15305 / DSM 20229 / NCIMB 8711 / NCTC 7292 / S-41).